Reading from the N-terminus, the 92-residue chain is Small ribosomal subunit protein uS19c (92 aa).

Belongs to the universal ribosomal protein uS19 family.

The protein localises to the plastid. Its subcellular location is the chloroplast. Functionally, protein S19 forms a complex with S13 that binds strongly to the 16S ribosomal RNA. The chain is Small ribosomal subunit protein uS19c from Tupiella akineta (Green alga).